The following is a 109-amino-acid chain: Trafficking protein particle complex subunit 2-like protein (109 aa).

It belongs to the TRAPP small subunits family. Sedlin subfamily. Component of the multisubunit TRAPP (transport protein particle) complex, which includes at least TRAPPC2, TRAPPC2L, TRAPPC3, TRAPPC3L, TRAPPC4, TRAPPC5, TRAPPC8, TRAPPC9, TRAPPC10, TRAPPC11 and TRAPPC12. Interacts with the heterodimer TRAPPC3-TRAPPC6A.

The protein localises to the cytoplasm. The protein resides in the perinuclear region. It is found in the endoplasmic reticulum. It localises to the golgi apparatus. May play a role in vesicular transport from endoplasmic reticulum to Golgi. This chain is Trafficking protein particle complex subunit 2-like protein (TRAPPC2L), found in Pongo abelii (Sumatran orangutan).